The primary structure comprises 351 residues: AA9 family lytic polysaccharide monooxygenase A (351 aa).

Residue His1 participates in Cu(2+) binding. Cys52 and Cys178 are joined by a disulfide. Residue Asn53 is glycosylated (N-linked (GlcNAc...) asparagine). Residue His86 participates in Cu(2+) binding. The N-linked (GlcNAc...) asparagine glycan is linked to Asn138. Positions 164 and 173 each coordinate O2. Tyr175 provides a ligand contact to Cu(2+). A lipid anchor (GPI-anchor amidated serine) is attached at Ser280. Positions 281 to 351 (SAIGTSTASS…RSGTLGRLSF (71 aa)) are cleaved as a propeptide — removed in mature form.

Belongs to the polysaccharide monooxygenase AA9 family. Requires Cu(2+) as cofactor.

It is found in the cell membrane. The enzyme catalyses [(1-&gt;4)-beta-D-glucosyl]n+m + reduced acceptor + O2 = 4-dehydro-beta-D-glucosyl-[(1-&gt;4)-beta-D-glucosyl]n-1 + [(1-&gt;4)-beta-D-glucosyl]m + acceptor + H2O.. In terms of biological role, lytic polysaccharide monooxygenase (LPMO) that depolymerizes crystalline and amorphous polysaccharides via the oxidation of scissile alpha- or beta-(1-4)-glycosidic bonds, yielding C1 or C4 oxidation products. Catalysis by LPMOs requires the reduction of the active-site copper from Cu(II) to Cu(I) by a reducing agent and H(2)O(2) or O(2) as a cosubstrate. Has broad specificity, cleaving at any position along the beta-glucan backbone of xyloglucan, regardless of substitutions. Shows minor activity on glucomannan. This is AA9 family lytic polysaccharide monooxygenase A from Gloeophyllum trabeum (Brown rot fungus).